The sequence spans 304 residues: UDP-3-O-acyl-N-acetylglucosamine deacetylase (304 aa).

Residues histidine 79, histidine 238, and aspartate 242 each coordinate Zn(2+). The active-site Proton donor is histidine 265.

The protein belongs to the LpxC family. Zn(2+) is required as a cofactor.

The catalysed reaction is a UDP-3-O-[(3R)-3-hydroxyacyl]-N-acetyl-alpha-D-glucosamine + H2O = a UDP-3-O-[(3R)-3-hydroxyacyl]-alpha-D-glucosamine + acetate. It participates in glycolipid biosynthesis; lipid IV(A) biosynthesis; lipid IV(A) from (3R)-3-hydroxytetradecanoyl-[acyl-carrier-protein] and UDP-N-acetyl-alpha-D-glucosamine: step 2/6. Functionally, catalyzes the hydrolysis of UDP-3-O-myristoyl-N-acetylglucosamine to form UDP-3-O-myristoylglucosamine and acetate, the committed step in lipid A biosynthesis. The chain is UDP-3-O-acyl-N-acetylglucosamine deacetylase from Laribacter hongkongensis (strain HLHK9).